The sequence spans 339 residues: D-erythrose-4-phosphate dehydrogenase (339 aa).

NAD(+)-binding positions include 12 to 13 (RI) and Arg-81. Substrate-binding positions include 154 to 156 (SCT), Arg-200, 213 to 214 (TK), and Arg-236. Catalysis depends on Cys-155, which acts as the Nucleophile. Asn-318 provides a ligand contact to NAD(+).

This sequence belongs to the glyceraldehyde-3-phosphate dehydrogenase family. Epd subfamily. In terms of assembly, homotetramer.

It is found in the cytoplasm. The catalysed reaction is D-erythrose 4-phosphate + NAD(+) + H2O = 4-phospho-D-erythronate + NADH + 2 H(+). Its pathway is cofactor biosynthesis; pyridoxine 5'-phosphate biosynthesis; pyridoxine 5'-phosphate from D-erythrose 4-phosphate: step 1/5. In terms of biological role, catalyzes the NAD-dependent conversion of D-erythrose 4-phosphate to 4-phosphoerythronate. The protein is D-erythrose-4-phosphate dehydrogenase of Escherichia coli (strain UTI89 / UPEC).